A 100-amino-acid chain; its full sequence is Urease subunit gamma (100 aa).

This sequence belongs to the urease gamma subunit family. Heterotrimer of UreA (gamma), UreB (beta) and UreC (alpha) subunits. Three heterotrimers associate to form the active enzyme.

The protein localises to the cytoplasm. It catalyses the reaction urea + 2 H2O + H(+) = hydrogencarbonate + 2 NH4(+). It functions in the pathway nitrogen metabolism; urea degradation; CO(2) and NH(3) from urea (urease route): step 1/1. This is Urease subunit gamma from Burkholderia multivorans (strain ATCC 17616 / 249).